Here is a 203-residue protein sequence, read N- to C-terminus: ATP-dependent Clp protease proteolytic subunit (203 aa).

Catalysis depends on S107, which acts as the Nucleophile. The active site involves H132.

Belongs to the peptidase S14 family. As to quaternary structure, fourteen ClpP subunits assemble into 2 heptameric rings which stack back to back to give a disk-like structure with a central cavity, resembling the structure of eukaryotic proteasomes.

It is found in the cytoplasm. It catalyses the reaction Hydrolysis of proteins to small peptides in the presence of ATP and magnesium. alpha-casein is the usual test substrate. In the absence of ATP, only oligopeptides shorter than five residues are hydrolyzed (such as succinyl-Leu-Tyr-|-NHMec, and Leu-Tyr-Leu-|-Tyr-Trp, in which cleavage of the -Tyr-|-Leu- and -Tyr-|-Trp bonds also occurs).. In terms of biological role, cleaves peptides in various proteins in a process that requires ATP hydrolysis. Has a chymotrypsin-like activity. Plays a major role in the degradation of misfolded proteins. This chain is ATP-dependent Clp protease proteolytic subunit, found in Shewanella sediminis (strain HAW-EB3).